Here is a 201-residue protein sequence, read N- to C-terminus: Pyridoxal 5'-phosphate synthase subunit PdxT (201 aa).

An L-glutamine-binding site is contributed by Gly-49–Ser-51. Cys-81 acts as the Nucleophile in catalysis. Residues Arg-110 and Ile-139–Arg-140 each bind L-glutamine. Catalysis depends on charge relay system residues His-180 and Glu-182.

Belongs to the glutaminase PdxT/SNO family. In terms of assembly, in the presence of PdxS, forms a dodecamer of heterodimers. Only shows activity in the heterodimer.

It catalyses the reaction aldehydo-D-ribose 5-phosphate + D-glyceraldehyde 3-phosphate + L-glutamine = pyridoxal 5'-phosphate + L-glutamate + phosphate + 3 H2O + H(+). The catalysed reaction is L-glutamine + H2O = L-glutamate + NH4(+). The protein operates within cofactor biosynthesis; pyridoxal 5'-phosphate biosynthesis. Its function is as follows. Catalyzes the hydrolysis of glutamine to glutamate and ammonia as part of the biosynthesis of pyridoxal 5'-phosphate. The resulting ammonia molecule is channeled to the active site of PdxS. The protein is Pyridoxal 5'-phosphate synthase subunit PdxT of Salinispora arenicola (strain CNS-205).